Reading from the N-terminus, the 680-residue chain is MSDDPGQMLLIYDDPSDQRSLSLDDASSTEESPDDNNLSLEAVHNAIPYLGQIFLTHDTAYEFYSTFAKRCGFSIRRHRTEGKDGVGKGLTRRYFVCHRAGNTPIKTLSEGKPQRNRRSSRCGCQAYLRISKLTELGSTEWRVTGFANHHNHELLEPNQVRFLPAYRSISDADKSRILMFSKTGISVQQMMRLLELEKCVEPGFLPFTEKDVRNLLQSFKKLDPEDENIDFLRMCQSIKEKDPNFKFEFTLDANDKLENIAWSYASSIQSYELFGDAVVFDTTHRLSAVEMPLGIWVGVNNYGVPCFFGCVLLRDENLRSWSWALQAFTGFMNGKAPQTILTDHNMCLKEAIAGEMPATKHALCIWMVVGKFPSWFNAGLGERYNDWKAEFYRLYHLESVEEFELGWRDMVNSFGLHTNRHINNLYASRSLWSLPYLRSHFLAGMTLTGRSKAINAFIQRFLSAQTRLAHFVEQVAVVVDFKDQATEQQTMQQNLQNISLKTGAPMESHAASVLTPFAFSKLQEQLVLAAHYASFQMDEGYLVRHHTKLDGGRKVYWVPQEGIISCSCQLFEFSGFLCRHALRVLSTGNCFQVPDRYLPLRWRRISTSFSKTFRSNAEDHGERVQLLQNLVSTLVSESAKSKERLDIATEQTSILLSRIREQPVSSLAIRDISSSVQRNF.

Positions 1-36 (MSDDPGQMLLIYDDPSDQRSLSLDDASSTEESPDDN) are disordered. The region spanning 62–156 (EFYSTFAKRC…ANHHNHELLE (95 aa)) is the FAR1 domain. Residues 277-373 (AVVFDTTHRL…CIWMVVGKFP (97 aa)) form the MULE domain. An SWIM-type zinc finger spans residues 556 to 589 (YWVPQEGIISCSCQLFEFSGFLCRHALRVLSTGN).

It belongs to the FHY3/FAR1 family. Expressed in hypocotyls, rosette and cauline leaves, inflorescences stems, flowers and siliques.

Its subcellular location is the nucleus. In terms of biological role, putative transcription activator involved in regulating light control of development. In Arabidopsis thaliana (Mouse-ear cress), this protein is Protein FAR1-RELATED SEQUENCE 11 (FRS11).